The following is a 287-amino-acid chain: Ketoacyl reductase HetN (287 aa).

11–35 (LTGASRGLGVYIARALAKEQATVVC) is an NAD(+) binding site. Substrate is bound at residue serine 142. The active-site Proton acceptor is tyrosine 155.

The protein belongs to the short-chain dehydrogenases/reductases (SDR) family.

Its function is as follows. May be involved in repressing heterocyst differentiation and may be essential for preventing all vegetative cells from differentiating. This chain is Ketoacyl reductase HetN (hetN), found in Nostoc sp. (strain PCC 7120 / SAG 25.82 / UTEX 2576).